The chain runs to 185 residues: Putative 3-methyladenine DNA glycosylase (185 aa).

It belongs to the DNA glycosylase MPG family.

The polypeptide is Putative 3-methyladenine DNA glycosylase (Rhizobium meliloti (strain 1021) (Ensifer meliloti)).